A 37-amino-acid polypeptide reads, in one-letter code: Cytochrome b6-f complex subunit 5 (37 aa).

A helical transmembrane segment spans residues 5–25 (LLFGIVLGLIPVTLVGLFVAA).

The protein belongs to the PetG family. The 4 large subunits of the cytochrome b6-f complex are cytochrome b6, subunit IV (17 kDa polypeptide, PetD), cytochrome f and the Rieske protein, while the 4 small subunits are PetG, PetL, PetM and PetN. The complex functions as a dimer.

It localises to the plastid. It is found in the chloroplast thylakoid membrane. Its function is as follows. Component of the cytochrome b6-f complex, which mediates electron transfer between photosystem II (PSII) and photosystem I (PSI), cyclic electron flow around PSI, and state transitions. PetG is required for either the stability or assembly of the cytochrome b6-f complex. This Rhodomonas salina (Cryptomonas salina) protein is Cytochrome b6-f complex subunit 5.